Reading from the N-terminus, the 387-residue chain is Patatin group D-3 (387 aa).

The signal sequence occupies residues 1 to 23 (MATTKSFLILIVMILATTSSTFA). A PNPLA domain is found at 32-230 (LSIDGGGIKG…TVADPALLSI (199 aa)). The GXGXXG motif lies at 36–41 (GGGIKG). The short motif at 75–79 (GTSTG) is the GXSXG element. Ser77 functions as the Nucleophile in the catalytic mechanism. A glycan (N-linked (GlcNAc...) asparagine) is linked at Asn115. The active-site Proton acceptor is Asp216. The DGA/G motif lies at 216–218 (DGA). Residues 361–385 (ETYEEALKRFAKLLSDRKKLRANKA) are a coiled coil.

This sequence belongs to the patatin family. As to expression, tuber.

The protein localises to the vacuole. Functionally, probable lipolytic acyl hydrolase (LAH), an activity which is thought to be involved in the response of tubers to pathogens. This Solanum tuberosum (Potato) protein is Patatin group D-3.